The sequence spans 63 residues: Large ribosomal subunit protein uL29 (63 aa).

The protein belongs to the universal ribosomal protein uL29 family.

The sequence is that of Large ribosomal subunit protein uL29 from Shewanella halifaxensis (strain HAW-EB4).